Reading from the N-terminus, the 105-residue chain is MKFLIVFVALFAVALAAPAAEEPTIVRSESDVGPESFKYDWETSDGQAAQAVGQLNDIGTENEAISVSGSYRFIADDGQTYQVNYIADKNGFQPQGAHLPVAPVA.

The N-terminal stretch at 1 to 18 (MKFLIVFVALFAVALAAP) is a signal peptide. A Chitin-binding type R&amp;R domain is found at 34–103 (PESFKYDWET…PQGAHLPVAP (70 aa)).

Functionally, component of the cuticle of the larva. This is Larval cuticle protein 65Ag1 from Drosophila melanogaster (Fruit fly).